The primary structure comprises 521 residues: U4/U6 small nuclear ribonucleoprotein Prp4 (521 aa).

Lysine 26 bears the N6-acetyllysine mark. WD repeat units follow at residues aspartate 229–leucine 268, histidine 271–isoleucine 318, histidine 321–glutamine 360, histidine 363–leucine 402, histidine 405–isoleucine 444, histidine 447–leucine 487, and histidine 490–glutamate 521.

Component of the precatalytic spliceosome (spliceosome B complex). Component of the U4/U6-U5 tri-snRNP complex, a building block of the precatalytic spliceosome (spliceosome B complex). The U4/U6-U5 tri-snRNP complex is composed of the U4, U6 and U5 snRNAs and at least PRPF3, PRPF4, PRPF6, PRPF8, PRPF31, SNRNP200, TXNL4A, SNRNP40, SNRPB, SNRPD1, SNRPD2, SNRPD3, SNRPE, SNRPF, SNRPG, DDX23, CD2BP2, PPIH, SNU13, EFTUD2, SART1 and USP39, plus LSM2, LSM3, LSM4, LSM5, LSM6, LSM7 and LSM8. Interacts directly with PRPF18, PPIH and PRPF3. Part of a heteromeric complex containing PPIH, PRPF3 and PRPF4 that is stable in the absence of RNA. Interacts with ERCC6.

The protein localises to the nucleus. The protein resides in the nucleus speckle. In terms of biological role, plays a role in pre-mRNA splicing as component of the U4/U6-U5 tri-snRNP complex that is involved in spliceosome assembly, and as component of the precatalytic spliceosome (spliceosome B complex). This chain is U4/U6 small nuclear ribonucleoprotein Prp4 (PRPF4), found in Bos taurus (Bovine).